Here is a 199-residue protein sequence, read N- to C-terminus: Recombination protein RecR (199 aa).

Residues 58–73 (CKKCFNLTSEDECEIC) form a C4-type zinc finger. In terms of domain architecture, Toprim spans 81–175 (KLICVVAETK…KVTRIAYGLP (95 aa)).

It belongs to the RecR family.

Functionally, may play a role in DNA repair. It seems to be involved in an RecBC-independent recombinational process of DNA repair. It may act with RecF and RecO. This Prochlorococcus marinus (strain MIT 9301) protein is Recombination protein RecR.